A 234-amino-acid polypeptide reads, in one-letter code: MKIIRVQDQLEGGKVAFSLLKESLAKGATTLGLATGSTPITFYQELVNSDLDCSALTSINLDEYVGLPVENDQSYDYFMRDQLFNAKPFKESFLPNGLADDLEAEVKRYDQVIAEHPIDFQILGIGRNGHIGFNEPGTSFAEKTHVVDLQASTIEANSRFFASIDDVPKQAISMGIASIMASKMIVLLAFGKEKAAAIKGMVSGPVTEALPASVLQQHDNVVVIIDEAAASELD.

Asp-62 serves as the catalytic Proton acceptor; for enolization step. The active-site For ring-opening step is Asn-128. His-130 functions as the Proton acceptor; for ring-opening step in the catalytic mechanism. Catalysis depends on Glu-135, which acts as the For ring-opening step.

The protein belongs to the glucosamine/galactosamine-6-phosphate isomerase family. NagB subfamily.

The enzyme catalyses alpha-D-glucosamine 6-phosphate + H2O = beta-D-fructose 6-phosphate + NH4(+). The protein operates within amino-sugar metabolism; N-acetylneuraminate degradation; D-fructose 6-phosphate from N-acetylneuraminate: step 5/5. Its function is as follows. Catalyzes the reversible isomerization-deamination of glucosamine 6-phosphate (GlcN6P) to form fructose 6-phosphate (Fru6P) and ammonium ion. This chain is Glucosamine-6-phosphate deaminase, found in Streptococcus equi subsp. equi (strain 4047).